Here is a 276-residue protein sequence, read N- to C-terminus: SRR1-like protein (276 aa).

Position 30 is a phosphoserine (serine 30). Tyrosine 34 carries the phosphotyrosine modification.

It belongs to the SRR1 family.

Possible regulator involved in a circadian clock input pathway. The protein is SRR1-like protein of Drosophila melanogaster (Fruit fly).